Reading from the N-terminus, the 619-residue chain is ATP-dependent zinc metalloprotease FtsH 1 (619 aa).

Topologically, residues 1-8 (MADEKRPA) are cytoplasmic. Residues 9–29 (SRAWLGYLLIAVGILVLSGIV) traverse the membrane as a helical segment. The Periplasmic segment spans residues 30–108 (RSRGRPLVPY…RIEAKSPQTS (79 aa)). The chain crosses the membrane as a helical span at residues 109 to 129 (VWMQVAIWMLPLVLINAAFFM). Residues 130–619 (MLRRAGQGAG…KIAVGPPSAA (490 aa)) lie on the Cytoplasmic side of the membrane. Position 203 to 210 (203 to 210 (GPPGTGKT)) interacts with ATP. H426 provides a ligand contact to Zn(2+). The active site involves E427. Zn(2+) contacts are provided by H430 and D503.

In the central section; belongs to the AAA ATPase family. The protein in the C-terminal section; belongs to the peptidase M41 family. As to quaternary structure, homohexamer. Requires Zn(2+) as cofactor.

It is found in the cell inner membrane. Acts as a processive, ATP-dependent zinc metallopeptidase for both cytoplasmic and membrane proteins. Plays a role in the quality control of integral membrane proteins. This Sorangium cellulosum (strain So ce56) (Polyangium cellulosum (strain So ce56)) protein is ATP-dependent zinc metalloprotease FtsH 1.